A 424-amino-acid polypeptide reads, in one-letter code: Serine--tRNA ligase (424 aa).

Residue 229 to 231 coordinates L-serine; that stretch reads TAE. ATP is bound by residues 260-262 and Val276; that span reads RTE. Glu283 is an L-serine binding site. 347 to 350 serves as a coordination point for ATP; sequence EVTS. Thr382 provides a ligand contact to L-serine.

The protein belongs to the class-II aminoacyl-tRNA synthetase family. Type-1 seryl-tRNA synthetase subfamily. In terms of assembly, homodimer. The tRNA molecule binds across the dimer.

The protein localises to the cytoplasm. It catalyses the reaction tRNA(Ser) + L-serine + ATP = L-seryl-tRNA(Ser) + AMP + diphosphate + H(+). It carries out the reaction tRNA(Sec) + L-serine + ATP = L-seryl-tRNA(Sec) + AMP + diphosphate + H(+). It functions in the pathway aminoacyl-tRNA biosynthesis; selenocysteinyl-tRNA(Sec) biosynthesis; L-seryl-tRNA(Sec) from L-serine and tRNA(Sec): step 1/1. Functionally, catalyzes the attachment of serine to tRNA(Ser). Is also able to aminoacylate tRNA(Sec) with serine, to form the misacylated tRNA L-seryl-tRNA(Sec), which will be further converted into selenocysteinyl-tRNA(Sec). In Rubrobacter xylanophilus (strain DSM 9941 / JCM 11954 / NBRC 16129 / PRD-1), this protein is Serine--tRNA ligase.